The following is a 205-amino-acid chain: Proteasome subunit beta (205 aa).

A propeptide spans 1-9 (MNQTENMEG) (removed in mature form; by autocatalysis). The active-site Nucleophile is Thr-10.

The protein belongs to the peptidase T1B family. As to quaternary structure, the 20S proteasome core is composed of 14 alpha and 14 beta subunits that assemble into four stacked heptameric rings, resulting in a barrel-shaped structure. The two inner rings, each composed of seven catalytic beta subunits, are sandwiched by two outer rings, each composed of seven alpha subunits. The catalytic chamber with the active sites is on the inside of the barrel. Has a gated structure, the ends of the cylinder being occluded by the N-termini of the alpha-subunits. Is capped at one or both ends by the proteasome regulatory ATPase, PAN.

It is found in the cytoplasm. It catalyses the reaction Cleavage of peptide bonds with very broad specificity.. The formation of the proteasomal ATPase PAN-20S proteasome complex, via the docking of the C-termini of PAN into the intersubunit pockets in the alpha-rings, triggers opening of the gate for substrate entry. Interconversion between the open-gate and close-gate conformations leads to a dynamic regulation of the 20S proteasome proteolysis activity. Functionally, component of the proteasome core, a large protease complex with broad specificity involved in protein degradation. This is Proteasome subunit beta from Methanosphaera stadtmanae (strain ATCC 43021 / DSM 3091 / JCM 11832 / MCB-3).